The sequence spans 56 residues: MATTMAKLITLVVLAILAFVEVSVSGYKTSISTITIEDNGRCTKSIPPICFPDGRP.

The first 25 residues, 1 to 25, serve as a signal peptide directing secretion; that stretch reads MATTMAKLITLVVLAILAFVEVSVS. Residues 26-39 constitute a propeptide that is removed on maturation; the sequence is GYKTSISTITIEDN. The segment at residues 40-53 is a cross-link (cyclopeptide (Gly-Asp)); it reads GRCTKSIPPICFPD. Cysteine 42 and cysteine 50 form a disulfide bridge. Residues 54-56 constitute a propeptide that is removed on maturation; the sequence is GRP.

In terms of processing, this is a cyclic peptide.

Functionally, inhibits trypsin, cathepsin G, elastase, chymotrypsin and thrombin. Does not inhibit factor Xa. This Helianthus annuus (Common sunflower) protein is Trypsin inhibitor 1.